Consider the following 139-residue polypeptide: Ribulose bisphosphate carboxylase small subunit (139 aa).

Belongs to the RuBisCO small chain family. Heterohexadecamer of 8 large and 8 small subunits.

The protein localises to the plastid. Its subcellular location is the chloroplast. Its function is as follows. RuBisCO catalyzes two reactions: the carboxylation of D-ribulose 1,5-bisphosphate, the primary event in carbon dioxide fixation, as well as the oxidative fragmentation of the pentose substrate in the photorespiration process. Both reactions occur simultaneously and in competition at the same active site. Although the small subunit is not catalytic it is essential for maximal activity. The protein is Ribulose bisphosphate carboxylase small subunit of Thalassiosira nordenskioeldii (Marine diatom).